The chain runs to 611 residues: Dihydroxy-acid dehydratase (611 aa).

D81 contributes to the Mg(2+) binding site. [2Fe-2S] cluster is bound at residue C122. Residues D123 and K124 each contribute to the Mg(2+) site. K124 carries the N6-carboxylysine modification. C195 serves as a coordination point for [2Fe-2S] cluster. Position 491 (E491) interacts with Mg(2+). Residue S517 is the Proton acceptor of the active site.

It belongs to the IlvD/Edd family. In terms of assembly, homodimer. It depends on [2Fe-2S] cluster as a cofactor. Mg(2+) is required as a cofactor.

The catalysed reaction is (2R)-2,3-dihydroxy-3-methylbutanoate = 3-methyl-2-oxobutanoate + H2O. The enzyme catalyses (2R,3R)-2,3-dihydroxy-3-methylpentanoate = (S)-3-methyl-2-oxopentanoate + H2O. Its pathway is amino-acid biosynthesis; L-isoleucine biosynthesis; L-isoleucine from 2-oxobutanoate: step 3/4. The protein operates within amino-acid biosynthesis; L-valine biosynthesis; L-valine from pyruvate: step 3/4. Functions in the biosynthesis of branched-chain amino acids. Catalyzes the dehydration of (2R,3R)-2,3-dihydroxy-3-methylpentanoate (2,3-dihydroxy-3-methylvalerate) into 2-oxo-3-methylpentanoate (2-oxo-3-methylvalerate) and of (2R)-2,3-dihydroxy-3-methylbutanoate (2,3-dihydroxyisovalerate) into 2-oxo-3-methylbutanoate (2-oxoisovalerate), the penultimate precursor to L-isoleucine and L-valine, respectively. This chain is Dihydroxy-acid dehydratase, found in Pasteurella multocida (strain Pm70).